We begin with the raw amino-acid sequence, 355 residues long: Blue-sensitive opsin P467 (355 aa).

Residues 1–36 (MNGTEGINFYVPLSNKTGLVRSPFEYPQYYLADPWK) are Extracellular-facing. Residues Asn2 and Asn15 are each glycosylated (N-linked (GlcNAc...) asparagine). A helical membrane pass occupies residues 37 to 61 (FKVLSFYMFFLIAAGMPLNGLTLFV). Topologically, residues 62 to 73 (TFQHKKLRQPLN) are cytoplasmic. Residues 74–98 (YILVNLAAANLVTVCCGFTVTFYAS) traverse the membrane as a helical segment. The Extracellular segment spans residues 99-113 (WYAYFVFGPIGCAIE). Cys110 and Cys187 form a disulfide bridge. The helical transmembrane segment at 114–133 (GFFATIGGQVALWSLVVLAI) threads the bilayer. The Cytoplasmic portion of the chain corresponds to 134–152 (ERYIVICKPMGNFRFSATH). Residues 153-176 (AIMGIAFTWFMALACAGPPLFGWS) form a helical membrane-spanning segment. Topologically, residues 177-202 (RFIPEGMQCSCGPDYYTLNPDFHNES) are extracellular. An N-linked (GlcNAc...) asparagine glycan is attached at Asn200. Residues 203–230 (YVIYMFIVHFTVPMVVIFFSYGRLVCKV) form a helical membrane-spanning segment. At 231–252 (REAAAQQQESATTQKAEKEVTR) the chain is on the cytoplasmic side. The helical transmembrane segment at 253 to 276 (MVILMVLGFLLAWTPYAATAIWIF) threads the bilayer. Over 277 to 284 (TNRGAAFS) the chain is Extracellular. The helical transmembrane segment at 285-309 (VTFMTIPAFFSKSSSIYNPIIYVLL) threads the bilayer. Residue Lys296 is modified to N6-(retinylidene)lysine. Residues 310 to 355 (NKQFRNCMVTTICCGKNPFGDEDVSSSVSQSKTEVSSVSSSQVAPA) are Cytoplasmic-facing. Residues 333 to 355 (VSSSVSQSKTEVSSVSSSQVAPA) are disordered. Positions 334–355 (SSSVSQSKTEVSSVSSSQVAPA) are enriched in low complexity.

Belongs to the G-protein coupled receptor 1 family. Opsin subfamily. Phosphorylated on some or all of the serine and threonine residues present in the C-terminal region. In this lizard the color pigments are found in the rod-shaped photoreceptor cells which have been derived from ancestral cone-like photoreceptors.

It is found in the membrane. Its function is as follows. Visual pigments are the light-absorbing molecules that mediate vision. They consist of an apoprotein, opsin, covalently linked to cis-retinal. The polypeptide is Blue-sensitive opsin P467 (Gekko gecko (Tokay gecko)).